The sequence spans 618 residues: Paraneoplastic antigen-like protein 5 (618 aa).

Positions 390–399 (AGEEGQRKES) are enriched in basic and acidic residues. Disordered regions lie at residues 390–409 (AGEE…EPDE), 451–475 (RDTL…EGQQ), and 519–549 (SMIT…ELRM).

It belongs to the PNMA family. Restricted to testis, where expression is low. Not detected in the brain.

It is found in the nucleus. In Mus musculus (Mouse), this protein is Paraneoplastic antigen-like protein 5 (Pnma5).